We begin with the raw amino-acid sequence, 300 residues long: Acetylglutamate kinase (300 aa).

Substrate contacts are provided by residues 72-73 (GG), arginine 94, and asparagine 197.

Belongs to the acetylglutamate kinase family. ArgB subfamily.

It localises to the cytoplasm. It carries out the reaction N-acetyl-L-glutamate + ATP = N-acetyl-L-glutamyl 5-phosphate + ADP. Its pathway is amino-acid biosynthesis; L-arginine biosynthesis; N(2)-acetyl-L-ornithine from L-glutamate: step 2/4. Functionally, catalyzes the ATP-dependent phosphorylation of N-acetyl-L-glutamate. In Azoarcus sp. (strain BH72), this protein is Acetylglutamate kinase.